Consider the following 286-residue polypeptide: Cysteine-rich repeat secretory protein 57 (286 aa).

The first 20 residues, 1-20 (METTKKLSVLLCLFFTMNQA), serve as a signal peptide directing secretion. The Extracellular portion of the chain corresponds to 21–265 (ISESDSDEHM…PSRSGSFSIR (245 aa)). 2 Gnk2-homologous domains span residues 29 to 131 (HMAT…DKFF) and 137 to 247 (TKPN…TSNS). Residues asparagine 35, asparagine 40, asparagine 44, asparagine 60, asparagine 69, asparagine 90, asparagine 100, asparagine 108, asparagine 209, and asparagine 246 are each glycosylated (N-linked (GlcNAc...) asparagine). Residues 266–284 (GNNKILVGMILAVSVFAFL) form a helical membrane-spanning segment. Topologically, residues 285–286 (GL) are cytoplasmic.

This sequence belongs to the cysteine-rich repeat secretory protein family.

It is found in the membrane. The chain is Cysteine-rich repeat secretory protein 57 (CRRSP57) from Arabidopsis thaliana (Mouse-ear cress).